Consider the following 362-residue polypeptide: Cell death regulator Aven (362 aa).

Disordered regions lie at residues 1–111 (MQAE…NYSK), 214–237 (VKPK…GPGG), and 253–362 (VLLG…SMIS). Residues 8–17 (RGGRGRRPGR) show a composition bias toward basic residues. Residues 37 to 47 (RGGGGGGGGDG) show a composition bias toward gly residues. Over residues 50–60 (RRGRGRGRGFR) the composition is skewed to basic residues. Residues 61–72 (GARGGRGGGGAP) show a composition bias toward gly residues. The segment covering 90–105 (VEDDSDAETYGEENDE) has biased composition (acidic residues). At S94 the chain carries Phosphoserine. K230 bears the N6-methyllysine mark. Residues 350 to 362 (EEELEDWLDSMIS) show a composition bias toward acidic residues.

Binds Apaf-1, BCL-2 and BAD (Bcl-xl). In terms of tissue distribution, highly expressed in testis, ovary, thymus, prostate, spleen, small intestine, colon, heart, skeletal muscle, liver, kidney and pancreas.

It is found in the endomembrane system. Protects against apoptosis mediated by Apaf-1. The sequence is that of Cell death regulator Aven (AVEN) from Homo sapiens (Human).